Reading from the N-terminus, the 468-residue chain is IQ domain-containing protein C (468 aa).

In terms of domain architecture, IQ spans 6 to 35; that stretch reads LVLKVTALQACIRGFLVRRQFQSLRGEYEA. Disordered regions lie at residues 113 to 157, 202 to 245, and 329 to 468; these read NASS…GPGL, EVNQ…PGEP, and SHKE…GPAG. Residues 139-150 are compositionally biased toward basic and acidic residues; it reads QETRDVSRKNDP. A compositionally biased stretch (basic and acidic residues) spans 415–426; sequence SSIERSPSESSH.

The protein is IQ domain-containing protein C (IQCC) of Bos taurus (Bovine).